Reading from the N-terminus, the 101-residue chain is MAKKSSVEKNNHRKELVKRFAEKRKALLAIANDESREMEERFEARLKLAELPRNSSATRIRNRCEMTGRPRAYYRKLGISRVALRELGNRGLIPGLVKSSW.

The protein belongs to the universal ribosomal protein uS14 family. In terms of assembly, part of the 30S ribosomal subunit. Contacts proteins S3 and S10.

Its function is as follows. Binds 16S rRNA, required for the assembly of 30S particles and may also be responsible for determining the conformation of the 16S rRNA at the A site. This is Small ribosomal subunit protein uS14 from Methylorubrum populi (strain ATCC BAA-705 / NCIMB 13946 / BJ001) (Methylobacterium populi).